The chain runs to 212 residues: Pyridoxine/pyridoxamine 5'-phosphate oxidase (212 aa).

Substrate is bound by residues 7–10 (RRQY) and Lys-65. FMN contacts are provided by residues 60–65 (RIVLLK), 75–76 (FT), Arg-81, Lys-82, and Gln-104. 3 residues coordinate substrate: Tyr-122, Arg-126, and Ser-130. FMN is bound by residues 139–140 (QS) and Trp-184. 190–192 (RLH) contributes to the substrate binding site. An FMN-binding site is contributed by Arg-194.

Belongs to the pyridoxamine 5'-phosphate oxidase family. As to quaternary structure, homodimer. Requires FMN as cofactor.

The enzyme catalyses pyridoxamine 5'-phosphate + O2 + H2O = pyridoxal 5'-phosphate + H2O2 + NH4(+). It catalyses the reaction pyridoxine 5'-phosphate + O2 = pyridoxal 5'-phosphate + H2O2. The protein operates within cofactor metabolism; pyridoxal 5'-phosphate salvage; pyridoxal 5'-phosphate from pyridoxamine 5'-phosphate: step 1/1. Its pathway is cofactor metabolism; pyridoxal 5'-phosphate salvage; pyridoxal 5'-phosphate from pyridoxine 5'-phosphate: step 1/1. In terms of biological role, catalyzes the oxidation of either pyridoxine 5'-phosphate (PNP) or pyridoxamine 5'-phosphate (PMP) into pyridoxal 5'-phosphate (PLP). The sequence is that of Pyridoxine/pyridoxamine 5'-phosphate oxidase from Alteromonas mediterranea (strain DSM 17117 / CIP 110805 / LMG 28347 / Deep ecotype).